Reading from the N-terminus, the 471-residue chain is 3-isopropylmalate dehydratase large subunit (471 aa).

[4Fe-4S] cluster contacts are provided by C349, C409, and C412.

Belongs to the aconitase/IPM isomerase family. LeuC type 1 subfamily. As to quaternary structure, heterodimer of LeuC and LeuD. [4Fe-4S] cluster serves as cofactor.

The enzyme catalyses (2R,3S)-3-isopropylmalate = (2S)-2-isopropylmalate. It participates in amino-acid biosynthesis; L-leucine biosynthesis; L-leucine from 3-methyl-2-oxobutanoate: step 2/4. Its function is as follows. Catalyzes the isomerization between 2-isopropylmalate and 3-isopropylmalate, via the formation of 2-isopropylmaleate. The protein is 3-isopropylmalate dehydratase large subunit of Aliivibrio fischeri (strain ATCC 700601 / ES114) (Vibrio fischeri).